We begin with the raw amino-acid sequence, 214 residues long: Phosphatidylserine decarboxylase proenzyme (214 aa).

Residue serine 182 is the Schiff-base intermediate with substrate; via pyruvic acid of the active site. Serine 182 is subject to Pyruvic acid (Ser); by autocatalysis.

Belongs to the phosphatidylserine decarboxylase family. PSD-A subfamily. Heterodimer of a large membrane-associated beta subunit and a small pyruvoyl-containing alpha subunit. Pyruvate serves as cofactor. In terms of processing, is synthesized initially as an inactive proenzyme. Formation of the active enzyme involves a self-maturation process in which the active site pyruvoyl group is generated from an internal serine residue via an autocatalytic post-translational modification. Two non-identical subunits are generated from the proenzyme in this reaction, and the pyruvate is formed at the N-terminus of the alpha chain, which is derived from the carboxyl end of the proenzyme. The post-translation cleavage follows an unusual pathway, termed non-hydrolytic serinolysis, in which the side chain hydroxyl group of the serine supplies its oxygen atom to form the C-terminus of the beta chain, while the remainder of the serine residue undergoes an oxidative deamination to produce ammonia and the pyruvoyl prosthetic group on the alpha chain.

Its subcellular location is the cell membrane. The enzyme catalyses a 1,2-diacyl-sn-glycero-3-phospho-L-serine + H(+) = a 1,2-diacyl-sn-glycero-3-phosphoethanolamine + CO2. The protein operates within phospholipid metabolism; phosphatidylethanolamine biosynthesis; phosphatidylethanolamine from CDP-diacylglycerol: step 2/2. In terms of biological role, catalyzes the formation of phosphatidylethanolamine (PtdEtn) from phosphatidylserine (PtdSer). The sequence is that of Phosphatidylserine decarboxylase proenzyme from Burkholderia multivorans (strain ATCC 17616 / 249).